Reading from the N-terminus, the 206-residue chain is Cytochrome c biogenesis ATP-binding export protein CcmA (206 aa).

The region spanning 2-206 (LEARDVVCIR…IQLTPSEGTP (205 aa)) is the ABC transporter domain. 34-41 (GANGVGKT) is a binding site for ATP.

The protein belongs to the ABC transporter superfamily. CcmA exporter (TC 3.A.1.107) family. In terms of assembly, the complex is composed of two ATP-binding proteins (CcmA) and two transmembrane proteins (CcmB).

The protein resides in the cell inner membrane. It catalyses the reaction heme b(in) + ATP + H2O = heme b(out) + ADP + phosphate + H(+). Its function is as follows. Part of the ABC transporter complex CcmAB involved in the biogenesis of c-type cytochromes; once thought to export heme, this seems not to be the case, but its exact role is uncertain. Responsible for energy coupling to the transport system. The chain is Cytochrome c biogenesis ATP-binding export protein CcmA from Pectobacterium atrosepticum (strain SCRI 1043 / ATCC BAA-672) (Erwinia carotovora subsp. atroseptica).